The following is a 62-amino-acid chain: DNA-directed RNA polymerase subunit Rpo10 (62 aa).

The Zn(2+) site is built by Cys6, Cys9, Cys43, and Cys44.

It belongs to the archaeal Rpo10/eukaryotic RPB10 RNA polymerase subunit family. As to quaternary structure, part of the RNA polymerase complex. It depends on Zn(2+) as a cofactor.

The protein resides in the cytoplasm. It carries out the reaction RNA(n) + a ribonucleoside 5'-triphosphate = RNA(n+1) + diphosphate. Functionally, DNA-dependent RNA polymerase (RNAP) catalyzes the transcription of DNA into RNA using the four ribonucleoside triphosphates as substrates. The polypeptide is DNA-directed RNA polymerase subunit Rpo10 (Methanosarcina barkeri (strain Fusaro / DSM 804)).